We begin with the raw amino-acid sequence, 91 residues long: MARSIKKGPFCDAHLLKKVEAAAASRDKKPIKTWSRRSTILPDFIGLTIAVHNGRQHVPVYVTENMVGHKLGEFALTRTFKGHAADKKAKK.

This sequence belongs to the universal ribosomal protein uS19 family.

In terms of biological role, protein S19 forms a complex with S13 that binds strongly to the 16S ribosomal RNA. The chain is Small ribosomal subunit protein uS19 from Paraburkholderia phymatum (strain DSM 17167 / CIP 108236 / LMG 21445 / STM815) (Burkholderia phymatum).